Reading from the N-terminus, the 345-residue chain is UDP-3-O-acylglucosamine N-acyltransferase (345 aa).

Residue histidine 253 is the Proton acceptor of the active site.

The protein belongs to the transferase hexapeptide repeat family. LpxD subfamily. In terms of assembly, homotrimer.

It catalyses the reaction a UDP-3-O-[(3R)-3-hydroxyacyl]-alpha-D-glucosamine + a (3R)-hydroxyacyl-[ACP] = a UDP-2-N,3-O-bis[(3R)-3-hydroxyacyl]-alpha-D-glucosamine + holo-[ACP] + H(+). The protein operates within bacterial outer membrane biogenesis; LPS lipid A biosynthesis. Catalyzes the N-acylation of UDP-3-O-acylglucosamine using 3-hydroxyacyl-ACP as the acyl donor. Is involved in the biosynthesis of lipid A, a phosphorylated glycolipid that anchors the lipopolysaccharide to the outer membrane of the cell. The sequence is that of UDP-3-O-acylglucosamine N-acyltransferase from Rickettsia massiliae (strain Mtu5).